Consider the following 553-residue polypeptide: Methionine--tRNA ligase (553 aa).

Positions 12 to 22 (PYANSQLHLGH) match the 'HIGH' region motif. The Zn(2+) site is built by cysteine 144, cysteine 147, cysteine 157, and cysteine 160. The 'KMSKS' region motif lies at 332–336 (KFSKS). Lysine 335 contacts ATP.

Belongs to the class-I aminoacyl-tRNA synthetase family. MetG type 1 subfamily. Monomer. The cofactor is Zn(2+).

It is found in the cytoplasm. It catalyses the reaction tRNA(Met) + L-methionine + ATP = L-methionyl-tRNA(Met) + AMP + diphosphate. In terms of biological role, is required not only for elongation of protein synthesis but also for the initiation of all mRNA translation through initiator tRNA(fMet) aminoacylation. The chain is Methionine--tRNA ligase from Dehalococcoides mccartyi (strain CBDB1).